The sequence spans 431 residues: Glutamate-1-semialdehyde 2,1-aminomutase 1 (431 aa).

Residue lysine 268 is modified to N6-(pyridoxal phosphate)lysine.

The protein belongs to the class-III pyridoxal-phosphate-dependent aminotransferase family. HemL subfamily. In terms of assembly, homodimer. The cofactor is pyridoxal 5'-phosphate.

It is found in the cytoplasm. The enzyme catalyses (S)-4-amino-5-oxopentanoate = 5-aminolevulinate. The protein operates within porphyrin-containing compound metabolism; protoporphyrin-IX biosynthesis; 5-aminolevulinate from L-glutamyl-tRNA(Glu): step 2/2. In Anoxybacillus flavithermus (strain DSM 21510 / WK1), this protein is Glutamate-1-semialdehyde 2,1-aminomutase 1.